A 1367-amino-acid chain; its full sequence is Protein patched homolog 3 (1367 aa).

The Cytoplasmic portion of the chain corresponds to 1–97 (MSFPDEETDL…WLFRIGCFVQ (97 aa)). The chain crosses the membrane as a helical span at residues 98–118 (RWAWSTIFISLFLYCLCLGGL). The Extracellular segment spans residues 119-625 (RHVTIETDLV…IADMLEEFSQ (507 aa)). 4 N-linked (GlcNAc...) asparagine glycosylation sites follow: Asn-235, Asn-310, Asn-454, and Asn-591. A helical membrane pass occupies residues 626–646 (FNYIIIVIGYILMVIYAAFTQ). The region spanning 627–788 (NYIIIVIGYI…MFIFPAMIGI (162 aa)) is the SSD domain. At 647–659 (GRFQGWWLAVQSN) the chain is on the cytoplasmic side. A helical membrane pass occupies residues 660 to 680 (VALAICGVILVTISSICGLGF). At 681-694 (ATHLGINFNAATTQ) the chain is on the extracellular side. Residues 695-715 (VVPFLSLGLGIDDMFLLLHNY) traverse the membrane as a helical segment. Topologically, residues 716–737 (DEIINICNKNEIGVLLKETGMS) are cytoplasmic. Residues 738–758 (VMLTSINNILAFISGYVLPIP) form a helical membrane-spanning segment. Residues 759 to 767 (ALRSFCSQT) lie on the Extracellular side of the membrane. A helical membrane pass occupies residues 768 to 788 (AILLAFNLIFLMFIFPAMIGI). Residues 789 to 863 (DLRRQRKGKR…KIYIPALKNN (75 aa)) lie on the Cytoplasmic side of the membrane. The chain crosses the membrane as a helical span at residues 864–884 (VVKACVLIGTTTAVVFGLYGM). Residues 885–1143 (YTSTLGLELA…WEQYLTLRWN (259 aa)) are Extracellular-facing. The helical transmembrane segment at 1144–1164 (LFQAICIIALAVFCVISILMF) threads the bilayer. The Cytoplasmic portion of the chain corresponds to 1165-1171 (NPWAATL). A helical transmembrane segment spans residues 1172–1192 (IMCIVVITTIELGGFMGLMGI). At 1193–1199 (KMNPISA) the chain is on the extracellular side. Residues 1200-1220 (VTLICAVGIGVEFTAHVELAF) form a helical membrane-spanning segment. The Cytoplasmic segment spans residues 1221–1237 (LTALGTIDQRLESCLQH). Residues 1238 to 1258 (MFVPVYHGAISTFLGVVMLVF) form a helical membrane-spanning segment. Over 1259-1273 (SEFDFVVTYFFYTMT) the chain is Extracellular. A helical membrane pass occupies residues 1274-1294 (LLVALGVFNGLCVLPVILTLV). Over 1295–1367 (GPKPELTPTD…SDDESSPAHK (73 aa)) the chain is Cytoplasmic. A disordered region spans residues 1302–1367 (PTDGSSVLPP…SDDESSPAHK (66 aa)). The segment covering 1346 to 1356 (RDSPSTSSASH) has biased composition (low complexity).

It belongs to the patched family. As to expression, in males, expressed in the precursor and mature sensory rays, the cloaca, and pre-anal ganglia and cephalic neurons. Also expressed in five cells in the valve region between the seminal vesicle and vas deferens of the somatic gonad.

It localises to the apical cell membrane. The protein resides in the cell junction. It is found in the adherens junction. Regulates osmosis during embryonic development. Required for larval development and in particular is involved in larval molting. The polypeptide is Protein patched homolog 3 (Caenorhabditis elegans).